Reading from the N-terminus, the 407-residue chain is MQTFLKGKRVGYWLSEKKIRKLNFQAFAELCRKRGVEVVQLDLTKPIEDQGPLDVIIHKLTDVILEADQNDSQSLELVQRFQEYIDAHPETIILDPLPAIRTLLDRSKSYELIRQIEAYMQDERICSPPFMELTSACGEDTLQLIEKNGLAFPFICKTRVAHGTNSHEMAIIFNQEGLKAVRPPCVIQSFINHNAVLYKVFVVGESYTVVKRPSLKNFSAGISDRESIFFNSHNVSKPESSSVLTALDKIEGVFERPDDDVIREISKALRQALGVSLFGIDIIINNQTGQHAVIDINAFPGYEGVSEFFTDLLNHIAAVLQGQAPEVTQLNRSKLLAEQTGGIMDERICCASTGCISVMGKDSSWIVESETNSSVKLQHQRLGCNSAVSPSFQQHCVATLATKASSQ.

Lys18 lines the 1D-myo-inositol 1,3,4-trisphosphate pocket. ATP is bound by residues Arg106 and Lys157. Positions 117 to 341 (EAYMQDERIC…RSKLLAEQTG (225 aa)) constitute an ATP-grasp domain. Residues His167 and Lys199 each coordinate 1D-myo-inositol 1,3,4-trisphosphate. Residues 188-199 (QSFINHNAVLYK), Ser214, Ser232, and Ser236 each bind ATP. Residues Asp281, Asp295, and Asn297 each coordinate Mg(2+). Asn297 serves as a coordination point for 1D-myo-inositol 1,3,4-trisphosphate.

The protein belongs to the ITPK1 family. Monomer. Mg(2+) is required as a cofactor.

It carries out the reaction 1D-myo-inositol 3,4,5,6-tetrakisphosphate + ATP = 1D-myo-inositol 1,3,4,5,6-pentakisphosphate + ADP + H(+). It catalyses the reaction 1D-myo-inositol 1,3,4-trisphosphate + ATP = 1D-myo-inositol 1,3,4,5-tetrakisphosphate + ADP + H(+). The enzyme catalyses 1D-myo-inositol 1,3,4-trisphosphate + ATP = 1D-myo-inositol 1,3,4,6-tetrakisphosphate + ADP + H(+). The catalysed reaction is 1D-myo-inositol 3,4,6-trisphosphate + ATP = 1D-myo-inositol 1,3,4,6-tetrakisphosphate + ADP + H(+). It carries out the reaction 1D-myo-inositol 1,3,4-trisphosphate + 1D-myo-inositol 1,3,4,5,6-pentakisphosphate = 1D-myo-inositol 3,4,5,6-tetrakisphosphate + 1D-myo-inositol 1,3,4,6-tetrakisphosphate. It catalyses the reaction 1D-myo-inositol 1,3,4-trisphosphate + 1D-myo-inositol 1,3,4,5,6-pentakisphosphate = 1D-myo-inositol 3,4,5,6-tetrakisphosphate + 1D-myo-inositol 1,3,4,5-tetrakisphosphate. In terms of biological role, kinase that can phosphorylate various inositol polyphosphate such as Ins(3,4,5,6)P4 or Ins(1,3,4)P3. Phosphorylates Ins(3,4,5,6)P4 at position 1 to form Ins(1,3,4,5,6)P5. This reaction is thought to have regulatory importance, since Ins(3,4,5,6)P4 is an inhibitor of plasma membrane Ca(2+)-activated Cl(-) channels, while Ins(1,3,4,5,6)P5 is not. Also phosphorylates Ins(1,3,4)P3 on O-5 and O-6 to form Ins(1,3,4,6)P4, an essential molecule in the hexakisphosphate (InsP6) pathway. Also acts as an inositol polyphosphate phosphatase that dephosphorylates Ins(1,3,4,5)P4 and Ins(1,3,4,6)P4 to Ins(1,3,4)P3, and Ins(1,3,4,5,6)P5 to Ins(3,4,5,6)P4. May also act as an isomerase that interconverts the inositol tetrakisphosphate isomers Ins(1,3,4,5)P4 and Ins(1,3,4,6)P4 in the presence of ADP and magnesium. Probably acts as the rate-limiting enzyme of the InsP6 pathway. Modifies TNF-alpha-induced apoptosis by interfering with the activation of TNFRSF1A-associated death domain. Plays an important role in MLKL-mediated necroptosis. Produces highly phosphorylated inositol phosphates such as inositolhexakisphosphate (InsP6) which bind to MLKL mediating the release of an N-terminal auto-inhibitory region leading to its activation. Essential for activated phospho-MLKL to oligomerize and localize to the cell membrane during necroptosis. The protein is Inositol-tetrakisphosphate 1-kinase (ITPK1) of Gallus gallus (Chicken).